Reading from the N-terminus, the 373-residue chain is Phospho-N-acetylmuramoyl-pentapeptide-transferase (373 aa).

Transmembrane regions (helical) follow at residues 16 to 36 (WWTKGSTSASLLGIVIFAASF), 46 to 66 (LLSLPLMISTLISVLIASWGI), 93 to 113 (PTMGGLLVVPVGLIIGSFVSV), 120 to 140 (QLLALSWITLAYMLIGGFDDW), 157 to 177 (LLLQTAASLIFLAWAGWQHWI), 185 to 205 (LGISIQMGFMIWPLALFVFLA), 216 to 236 (LDGLASGCGALVFTGLAVQLM), 242 to 262 (GNPVLAGFCMAMAGAWLGFLM), 270 to 290 (VFMGDTGSLAMGAALSGVAIL), 298 to 318 (LVMGGVFLAESLSVIIQVWVF), and 350 to 369 (MVVRRFWLSTGGLVLLGLLL).

The protein belongs to the glycosyltransferase 4 family. MraY subfamily. The cofactor is Mg(2+).

It is found in the cell inner membrane. It carries out the reaction UDP-N-acetyl-alpha-D-muramoyl-L-alanyl-gamma-D-glutamyl-meso-2,6-diaminopimeloyl-D-alanyl-D-alanine + di-trans,octa-cis-undecaprenyl phosphate = di-trans,octa-cis-undecaprenyl diphospho-N-acetyl-alpha-D-muramoyl-L-alanyl-D-glutamyl-meso-2,6-diaminopimeloyl-D-alanyl-D-alanine + UMP. It participates in cell wall biogenesis; peptidoglycan biosynthesis. Its function is as follows. Catalyzes the initial step of the lipid cycle reactions in the biosynthesis of the cell wall peptidoglycan: transfers peptidoglycan precursor phospho-MurNAc-pentapeptide from UDP-MurNAc-pentapeptide onto the lipid carrier undecaprenyl phosphate, yielding undecaprenyl-pyrophosphoryl-MurNAc-pentapeptide, known as lipid I. The protein is Phospho-N-acetylmuramoyl-pentapeptide-transferase of Prochlorococcus marinus (strain MIT 9313).